We begin with the raw amino-acid sequence, 202 residues long: uncharacterized protein (202 aa).

This is an uncharacterized protein from Archaeoglobus fulgidus (strain ATCC 49558 / DSM 4304 / JCM 9628 / NBRC 100126 / VC-16).